A 521-amino-acid chain; its full sequence is MGRKKIQIQRITDERNRQVTFTKRKFGLMKKAYELSVLCDCEIALIIFNHSNKLFQYASTDMDKVLLKYTEYNEPHESRTNADIIETLRKKGFNGCDSPEPDGEDSLEQSPLLEDKYRRASEELDGLFRRYGSTVPAPNFAMPVTVPVSNQSSLQFSNPSGSLVTPSLVTSSLTDPRLLSPQQPALQRNSVSPGLPQRPASAGAMLGGDLNSANGACPSPVGNGYVSARASPGLLPVANGNSLNKVIPAKSPPPPTHSTQLGAPSRKPDLRVITSQAGKGLMHHLTEDHLDLNNAQRLGVSQSTHSLTTPVVSVATPSLLSQGLPFSSMPTAYNTDYQLTSAELSSLPAFSSPGGLSLGNVTAWQQPQQPQQPQQPQPPQQQPPQPQQPQPQQPQQPQQPPQQQSHLVPVSLSNLIPGSPLPHVGAALTVTTHPHISIKSEPVSPSRERSPAPPPPAVFPAARPEPGDGLSSPAGGSYETGDRDDGRGDFGPTLGLLRPAPEPEAEGSAVKRMRLDTWTLK.

The region spanning 3–57 (RKKIQIQRITDERNRQVTFTKRKFGLMKKAYELSVLCDCEIALIIFNHSNKLFQY) is the MADS-box domain. Residues 58–86 (ASTDMDKVLLKYTEYNEPHESRTNADIIE) constitute a DNA-binding region (mef2-type). Phosphoserine occurs at positions 98, 106, and 110. A Phosphoserine; by PKA modification is found at Ser121. The disordered stretch occupies residues 174 to 207 (TDPRLLSPQQPALQRNSVSPGLPQRPASAGAMLG). Ser180 is modified (phosphoserine; by MAPK7). Over residues 180–192 (SPQQPALQRNSVS) the composition is skewed to polar residues. A Phosphoserine; by PKA modification is found at Ser190. Ser231 is modified (phosphoserine). Residues 244–266 (NKVIPAKSPPPPTHSTQLGAPSR) form a disordered region. The residue at position 245 (Lys245) is an N6-acetyllysine. Ser251 carries the phosphoserine modification. Residues 286–292 (TEDHLDL) form a beta domain region. 2 disordered regions span residues 357 to 407 (SLGN…QSHL) and 437 to 521 (SIKS…WTLK). Over residues 373–400 (PQQPQPPQQQPPQPQQPQPQQPQQPQQP) the composition is skewed to pro residues. An N6-acetyllysine; alternate modification is found at Lys439. Lys439 participates in a covalent cross-link: Glycyl lysine isopeptide (Lys-Gly) (interchain with G-Cter in SUMO); alternate. Ser444 is subject to Phosphoserine.

The protein belongs to the MEF2 family. As to quaternary structure, interacts with MYOG. Forms a complex with class II HDACs in undifferentiating cells. On myogenic differentiation, HDACs are released into the cytoplasm allowing MEF2s to interact with other proteins for activation. Interacts with HDAC4 (in undifferentiating cells); the interaction translocates MEF2D to nuclear dots. Forms a heterodimer with MEF2A. Interacts with MAPK7; the interaction phosphorylates but does not activate MEF2D. Interacts with CCAR2 and HDAC3. In terms of processing, phosphorylated on Ser-444 by CDK5 is required for Lys-439 sumoylation and inhibits transcriptional activity. In neurons, enhanced CDK5 activity induced by neurotoxins promotes caspase 3-mediated cleavage leading to neuron apoptosis. Phosphorylation on Ser-180 can be enhanced by EGF. Phosphorylated and activated by CaMK4. Acetylated on Lys-439 by CREBBP. Acetylated by EP300. Deacetylated by SIRT1 and HDAC3. Post-translationally, sumoylated on Lys-439 with SUMO2 but not SUMO1; which inhibits transcriptional activity and myogenic activity. Desumoylated by SENP3. In terms of processing, proteolytically cleaved in cerebellar granule neurons on several sites by caspase 7 following neurotoxicity. Preferentially cleaves the CDK5-mediated hyperphosphorylated form which leads to neuron apoptosis and transcriptional inactivation.

It is found in the nucleus. In terms of biological role, transcriptional activator which binds specifically to the MEF2 element, 5'-YTA[AT](4)TAR-3', found in numerous muscle-specific, growth factor- and stress-induced genes. Mediates cellular functions not only in skeletal and cardiac muscle development, but also in neuronal differentiation and survival. Plays diverse roles in the control of cell growth, survival and apoptosis via p38 MAPK signaling in muscle-specific and/or growth factor-related transcription. Plays a critical role in the regulation of neuronal apoptosis. The polypeptide is Myocyte-specific enhancer factor 2D (MEF2D) (Homo sapiens (Human)).